Reading from the N-terminus, the 549-residue chain is DDB1- and CUL4-associated factor 11 (549 aa).

Residues 1–24 show a composition bias toward low complexity; the sequence is MGSRNSSSAGSGSLEPSEGLSRRG. The segment at 1 to 40 is disordered; sequence MGSRNSSSAGSGSLEPSEGLSRRGAGLRRSEEEEEEDEDV. Residues Ser-73 and Ser-75 each carry the phosphoserine modification. The segment covering 80 to 89 has biased composition (basic and acidic residues); that stretch reads DSAWDGRLGD. The interval 80–100 is disordered; that stretch reads DSAWDGRLGDRYNPPVDATPD. 7 WD repeats span residues 170 to 210, 216 to 258, 263 to 302, 305 to 345, 353 to 392, 435 to 480, and 481 to 520; these read TYSQ…HKFK, DVGW…TALD, ERRFAVFSIAVSSDGREVLGGANDGCLYVFDREQNRRTLQ, SHED…EDDP, GHQDGITFIDSKGDARYLISNSKDQTIKLWDIRRFSSREG, GVLH…KKLT, and NHKACVRDVSWHPFEEKIVSSSWDGSLRLWQYRQAEYFQD.

Interacts with DDB1 and CUL4A.

Its pathway is protein modification; protein ubiquitination. Its function is as follows. May function as a substrate receptor for CUL4-DDB1 E3 ubiquitin-protein ligase complex. This Rattus norvegicus (Rat) protein is DDB1- and CUL4-associated factor 11 (Dcaf11).